The following is a 427-amino-acid chain: Trigger factor (427 aa).

In terms of domain architecture, PPIase FKBP-type spans 163–248 (GDTVVIDFVG…IHEVKAKEVP (86 aa)).

Belongs to the FKBP-type PPIase family. Tig subfamily.

The protein resides in the cytoplasm. It carries out the reaction [protein]-peptidylproline (omega=180) = [protein]-peptidylproline (omega=0). Functionally, involved in protein export. Acts as a chaperone by maintaining the newly synthesized protein in an open conformation. Functions as a peptidyl-prolyl cis-trans isomerase. The protein is Trigger factor of Streptococcus suis (strain 05ZYH33).